The sequence spans 217 residues: 3,4-dihydroxy-2-butanone 4-phosphate synthase (217 aa).

D-ribulose 5-phosphate is bound by residues 37 to 38 (RE), D42, 150 to 154 (RRGHT), and E174. E38 lines the Mg(2+) pocket. A Mg(2+)-binding site is contributed by H153.

This sequence belongs to the DHBP synthase family. Homodimer. The cofactor is Mg(2+). Requires Mn(2+) as cofactor.

It catalyses the reaction D-ribulose 5-phosphate = (2S)-2-hydroxy-3-oxobutyl phosphate + formate + H(+). It functions in the pathway cofactor biosynthesis; riboflavin biosynthesis; 2-hydroxy-3-oxobutyl phosphate from D-ribulose 5-phosphate: step 1/1. Functionally, catalyzes the conversion of D-ribulose 5-phosphate to formate and 3,4-dihydroxy-2-butanone 4-phosphate. The protein is 3,4-dihydroxy-2-butanone 4-phosphate synthase of Shewanella loihica (strain ATCC BAA-1088 / PV-4).